We begin with the raw amino-acid sequence, 23 residues long: Septenin 2b (23 aa).

As to expression, expressed in skin glands.

The protein resides in the secreted. May act as an antimicrobial peptide. In Osteopilus septentrionalis (Cuban treefrog), this protein is Septenin 2b.